The primary structure comprises 157 residues: ATP synthase subunit b (157 aa).

The chain crosses the membrane as a helical span at residues 7–27 (LIAQLVVFFILAWVTMKFVWP).

Belongs to the ATPase B chain family. As to quaternary structure, F-type ATPases have 2 components, F(1) - the catalytic core - and F(0) - the membrane proton channel. F(1) has five subunits: alpha(3), beta(3), gamma(1), delta(1), epsilon(1). F(0) has three main subunits: a(1), b(2) and c(10-14). The alpha and beta chains form an alternating ring which encloses part of the gamma chain. F(1) is attached to F(0) by a central stalk formed by the gamma and epsilon chains, while a peripheral stalk is formed by the delta and b chains.

The protein resides in the cell inner membrane. F(1)F(0) ATP synthase produces ATP from ADP in the presence of a proton or sodium gradient. F-type ATPases consist of two structural domains, F(1) containing the extramembraneous catalytic core and F(0) containing the membrane proton channel, linked together by a central stalk and a peripheral stalk. During catalysis, ATP synthesis in the catalytic domain of F(1) is coupled via a rotary mechanism of the central stalk subunits to proton translocation. In terms of biological role, component of the F(0) channel, it forms part of the peripheral stalk, linking F(1) to F(0). This chain is ATP synthase subunit b, found in Aromatoleum aromaticum (strain DSM 19018 / LMG 30748 / EbN1) (Azoarcus sp. (strain EbN1)).